A 492-amino-acid chain; its full sequence is MVARSRKRRAAPQDIYPTCKIAGNCPADIQNKFENKTIADKILQYGSLGVFFGGLGISSAGGSGGRLGYTPLSGGGGRVIAAAPVRPPITTESVGPLDIVPEVADPGGPTLVSLHELPAETPYVSSTNVTGDGAAEPLPAGHGGSQISDVTSGTSGTVSRTHINNPVFEAPMTGDQDVSDVHVFAHSESSITINQTENTGGELIEMVPLRHPPRSEGDFRETSFSTSTPIPDRSALRSINVASRRYQQVQVENPAFLNRPRELVQFENTFDNPAFVDDEQLSLLFEQDLDTVVATPDPAFQDVVRLSRPSFTQSRAGRVRVSRLGRTLTMQTRSGKAFGPAKHFYYELSSIAEGPEPDILIPESEQETSFTDATSKDTQQEAEVYADGSTLETDTSADENLTLVFSDRGRGQGSHVPIPGKSTIGGPVNIGDSKYYTLNPGETTSFEADVISPVFIFEGNADGTYYLEEPLRKKRRKSIFLLADGSVAVYAE.

Residues 2–10 (VARSRKRRA) carry the Nuclear localization signal motif. An intrachain disulfide couples Cys19 to Cys25. Positions 211–230 (HPPRSEGDFRETSFSTSTPI) are disordered. The short motif at 473–478 (KKRRKS) is the Nuclear localization signal element.

It belongs to the papillomaviridae L2 protein family. Interacts with major capsid protein L1. Interacts with E2; this interaction inhibits E2 transcriptional activity but not the DNA replication function E2. Interacts with host GADD45GIP1. Interacts with host HSPA8; this interaction is required for L2 nuclear translocation. Interacts with host importins KPNB2 and KPNB3. Forms a complex with importin alpha2-beta1 heterodimers via interaction with the importin alpha2 adapter. Interacts with host DYNLT1; this interaction is essential for virus intracellular transport during entry. Interacts (via C-terminus) with host retromer subunits VPS35 and VPS29. Highly phosphorylated.

It localises to the virion. Its subcellular location is the host nucleus. The protein resides in the host early endosome. The protein localises to the host Golgi apparatus. Its function is as follows. Minor protein of the capsid that localizes along the inner surface of the virion, within the central cavities beneath the L1 pentamers. Plays a role in capsid stabilization through interaction with the major capsid protein L1. Once the virion enters the host cell, L2 escorts the genomic DNA into the nucleus by promoting escape from the endosomal compartments and traffic through the host Golgi network. Mechanistically, the C-terminus of L2 possesses a cell-penetrating peptide that protudes from the host endosome, interacts with host cytoplasmic retromer cargo and thereby mediates the capsid delivery to the host trans-Golgi network. Plays a role through its interaction with host dynein in the intracellular microtubule-dependent transport of viral capsid toward the nucleus. Mediates the viral genome import into the nucleus through binding to host importins. Once within the nucleus, L2 localizes viral genomes to host PML bodies in order to activate early gene expression for establishment of infection. Later on, promotes late gene expression by interacting with the viral E2 protein and by inhibiting its transcriptional activation functions. During virion assembly, encapsidates the genome by direct interaction with the viral DNA. The polypeptide is Minor capsid protein L2 (Cottontail rabbit papillomavirus (strain Kansas) (CRPV)).